The chain runs to 277 residues: Carbonyl reductase [NADPH] 1 (277 aa).

N-acetylserine is present on serine 2. 2 positions are modified to phosphoserine: serine 2 and serine 30. NADP(+)-binding positions include 10 to 34 (VTGGNKGIGLAIVRDLCRLFSGDVV), 63 to 64 (DI), and asparagine 90. Residues 95-97 (FKV) and glutamine 106 contribute to the glutathione site. Serine 140 serves as a coordination point for substrate. 193-194 (AY) is a binding site for glutathione. Tyrosine 194 serves as the catalytic Proton acceptor. Residues 194-198 (YGVTK) and 231-233 (VRT) contribute to the NADP(+) site. The residue at position 239 (lysine 239) is an N6-1-carboxyethyl lysine.

Belongs to the short-chain dehydrogenases/reductases (SDR) family. As to quaternary structure, monomer. In terms of tissue distribution, expressed in kidney (at protein level).

It is found in the cytoplasm. The enzyme catalyses a secondary alcohol + NADP(+) = a ketone + NADPH + H(+). It catalyses the reaction a primary alcohol + NADP(+) = an aldehyde + NADPH + H(+). The catalysed reaction is prostaglandin F2alpha + NADP(+) = prostaglandin E2 + NADPH + H(+). It carries out the reaction prostaglandin E1 + NADP(+) = 15-oxoprostaglandin E1 + NADPH + H(+). The enzyme catalyses menadione + NADPH + H(+) = menadiol + NADP(+). It catalyses the reaction prostaglandin D2 + NADP(+) = 15-oxoprostaglandin D2 + NADPH + H(+). The catalysed reaction is prostaglandin E2 + NADP(+) = 15-oxoprostaglandin E2 + NADPH + H(+). It carries out the reaction prostaglandin F2alpha + NADP(+) = 15-oxoprostaglandin F2alpha + NADPH + H(+). The enzyme catalyses daunorubicin + NADPH + H(+) = 13-dihydrodaunorubicin + NADP(+). It catalyses the reaction S-nitrosoglutathione + NADPH + H(+) = S-(hydroxysulfenamide)glutathione + NADP(+). The catalysed reaction is cortisol + NADPH + H(+) = 20beta-dihydrocortisol + NADP(+). It carries out the reaction corticosterone + NADPH + H(+) = 20beta-dihydrocorticosterone + NADP(+). Inhibited by quercetin, rutenin and its derivatives. Functionally, NADPH-dependent reductase with broad substrate specificity. Catalyzes the reduction of a wide variety of carbonyl compounds including quinones, prostaglandins, menadione, plus various xenobiotics. Catalyzes the reduction of the antitumor anthracyclines doxorubicin and daunorubicin to the cardiotoxic compounds doxorubicinol and daunorubicinol. Can convert prostaglandin E to prostaglandin F2-alpha. Can bind glutathione, which explains its higher affinity for glutathione-conjugated substrates. Catalyzes the reduction of S-nitrosoglutathione. In addition, participates in the glucocorticoid metabolism by catalyzing the NADPH-dependent cortisol/corticosterone into 20beta-dihydrocortisol (20b-DHF) or 20beta-corticosterone (20b-DHB), which are weak agonists of NR3C1 and NR3C2 in adipose tissue. In Homo sapiens (Human), this protein is Carbonyl reductase [NADPH] 1.